Consider the following 592-residue polypeptide: Aspartate--tRNA ligase (592 aa).

Residue Glu-173 participates in L-aspartate binding. The interval 197-200 (QLFK) is aspartate. Arg-219 contacts L-aspartate. ATP is bound by residues 219-221 (RDE) and Gln-228. His-448 provides a ligand contact to L-aspartate. Glu-482 contacts ATP. Arg-489 serves as a coordination point for L-aspartate. ATP is bound at residue 534-537 (GLDR).

Belongs to the class-II aminoacyl-tRNA synthetase family. Type 1 subfamily. In terms of assembly, homodimer.

The protein resides in the cytoplasm. It carries out the reaction tRNA(Asp) + L-aspartate + ATP = L-aspartyl-tRNA(Asp) + AMP + diphosphate. Catalyzes the attachment of L-aspartate to tRNA(Asp) in a two-step reaction: L-aspartate is first activated by ATP to form Asp-AMP and then transferred to the acceptor end of tRNA(Asp). This Shewanella baltica (strain OS195) protein is Aspartate--tRNA ligase.